The following is a 126-amino-acid chain: Methylglyoxal synthase (126 aa).

Positions 1 to 126 constitute an MGS-like domain; sequence MAGSKCLALI…AIKLLPTLEA (126 aa). Substrate-binding positions include H12, K16, 38-41, and 59-60; these read TGTT and SG. The active-site Proton donor/acceptor is D65. Residue H92 coordinates substrate.

This sequence belongs to the methylglyoxal synthase family.

It catalyses the reaction dihydroxyacetone phosphate = methylglyoxal + phosphate. Catalyzes the formation of methylglyoxal from dihydroxyacetone phosphate. This chain is Methylglyoxal synthase, found in Rhizobium etli (strain ATCC 51251 / DSM 11541 / JCM 21823 / NBRC 15573 / CFN 42).